Consider the following 92-residue polypeptide: PqqA binding protein (92 aa).

This sequence belongs to the PqqD family. Monomer. Interacts with PqqE.

Its pathway is cofactor biosynthesis; pyrroloquinoline quinone biosynthesis. Its function is as follows. Functions as a PqqA binding protein and presents PqqA to PqqE, in the pyrroloquinoline quinone (PQQ) biosynthetic pathway. This is PqqA binding protein from Pseudomonas aeruginosa (strain UCBPP-PA14).